Consider the following 650-residue polypeptide: Vitrin (650 aa).

The first 26 residues, 1 to 26 (MGIVVPTMKASVIEVLLVLLVTGIHS), serve as a signal peptide directing secretion. The 94-residue stretch at 40–133 (TVPQINCDVK…LSLPRWRESF (94 aa)) folds into the LCCL domain. Disulfide bonds link C46–C62 and C66–C86. A disordered region spans residues 198-226 (RSTSKPFAASVTNSPRPQPVGHRSQEMEE). 2 consecutive VWFA domains span residues 265 to 450 (DLSF…VKRV) and 467 to 640 (DIGF…IQNI). N492 is a glycosylation site (N-linked (GlcNAc...) asparagine).

In terms of assembly, binds dermatan sulfate and chondroitin sulfate.

The protein localises to the secreted. It is found in the extracellular space. Its subcellular location is the extracellular matrix. In terms of biological role, promotes matrix assembly and cell adhesiveness. Plays a role in spinal cord formation by regulating the proliferation and differentiation of neural stem cells. The protein is Vitrin (Vit) of Mus musculus (Mouse).